We begin with the raw amino-acid sequence, 928 residues long: MYCBP-associated protein (928 aa).

Disordered regions lie at residues 1–38 and 164–183; these read MKKA…PVSN and EEPK…APPL. Residues 164–177 show a composition bias toward basic and acidic residues; sequence EEPKPKSPKEEKRP. Position 557 is a phosphoserine (serine 557). The residue at position 558 (threonine 558) is a Phosphothreonine. Serine 564 bears the Phosphoserine mark. The disordered stretch occupies residues 786–881; that stretch reads IPDEGQKSPP…SSATSQEPID (96 aa). The segment covering 806–865 has biased composition (basic and acidic residues); it reads LGKEDRRGGAQEKKQLSARDKEEKKGSKTPSKEDRLNSKKQKAKDDKKVVKSTSRDRLLS.

Interacts with MYCBP. Expressed in brain, retina, testis, heart and lung. Not detected in liver, kidney or intestine. In brain, highly abundant in CNS neurons of the hippocampus and cerebellum. Strongly expressed in cochlea and vestibular sensory epithelia. In both the organ of Corti and the vestibular organ, expression is restricted to hair cells.

It localises to the cytoplasm. The protein resides in the membrane. Functionally, may play a role in spermatogenesis. May be involved in synaptic processes. The polypeptide is MYCBP-associated protein (Rattus norvegicus (Rat)).